The sequence spans 144 residues: Bacilliredoxin BCE33L1972 (144 aa).

The protein belongs to the bacilliredoxin family.

The protein is Bacilliredoxin BCE33L1972 of Bacillus cereus (strain ZK / E33L).